We begin with the raw amino-acid sequence, 300 residues long: MRALEGPGLSLLCLVLALPALLPVPAVRGVAETPTYPWRDAETGERLVCAQCPPGTFVQRPCRRDSPTTCGPCPPRHYTQFWNYLERCRYCNVLCGEREEEARACHATHNRACRCRTGFFAHAGFCLEHASCPPGAGVIAPGTPSQNTQCQPCPPGTFSASSSSSEQCQPHRNCTALGLALNVPGSSSHDTLCTSCTGFPLSTRVPGAEECERAVIDFVAFQDISIKRLQRLLQALEAPEGWGPTPRAGRAALQLKLRRRLTELLGAQDGALLVRLLQALRVARMPGLERSVRERFLPVH.

A signal peptide spans 1–29; the sequence is MRALEGPGLSLLCLVLALPALLPVPAVRG. TNFR-Cys repeat units lie at residues 31-70, 72-113, 115-150, and 152-193; these read AETP…PTTC, PCPP…NRAC, CRTG…NTQC, and PCPP…DTLC. 8 disulfides stabilise this stretch: Cys-49/Cys-62, Cys-52/Cys-70, Cys-73/Cys-88, Cys-91/Cys-105, Cys-95/Cys-113, Cys-115/Cys-126, Cys-132/Cys-150, and Cys-153/Cys-168. An N-linked (GlcNAc...) asparagine glycan is attached at Asn-173. Cysteines 174 and 193 form a disulfide.

Detected in fetal lung, brain and liver. Detected in adult stomach, spinal cord, lymph node, trachea, spleen, colon and lung. Highly expressed in several primary tumors from colon, stomach, rectum, esophagus and in SW480 colon carcinoma cells.

The protein localises to the secreted. Decoy receptor that can neutralize the cytotoxic ligands TNFS14/LIGHT, TNFSF15 and TNFSF6/FASL. Protects against apoptosis. The polypeptide is Tumor necrosis factor receptor superfamily member 6B (TNFRSF6B) (Homo sapiens (Human)).